A 158-amino-acid chain; its full sequence is Lipoprotein signal peptidase (158 aa).

Helical transmembrane passes span 7–27 (LFWI…YWVV), 38–58 (ILPG…FSLF), 67–87 (WLSL…PVLE), and 95–115 (GLIL…GYVV). Residues Asp116 and Asp132 contribute to the active site. A helical membrane pass occupies residues 125-145 (FAVFNMADSFISIGIVCLLLA).

It belongs to the peptidase A8 family.

Its subcellular location is the cell inner membrane. It catalyses the reaction Release of signal peptides from bacterial membrane prolipoproteins. Hydrolyzes -Xaa-Yaa-Zaa-|-(S,diacylglyceryl)Cys-, in which Xaa is hydrophobic (preferably Leu), and Yaa (Ala or Ser) and Zaa (Gly or Ala) have small, neutral side chains.. Its pathway is protein modification; lipoprotein biosynthesis (signal peptide cleavage). In terms of biological role, this protein specifically catalyzes the removal of signal peptides from prolipoproteins. The chain is Lipoprotein signal peptidase from Trichormus variabilis (strain ATCC 29413 / PCC 7937) (Anabaena variabilis).